A 354-amino-acid polypeptide reads, in one-letter code: uncharacterized protein (354 aa).

It belongs to the asfivirus B354L family.

This is an uncharacterized protein from Ornithodoros (relapsing fever ticks).